The following is a 485-amino-acid chain: Glutamyl-tRNA(Gln) amidotransferase subunit A (485 aa).

Residues K78 and S153 each act as charge relay system in the active site. Catalysis depends on S177, which acts as the Acyl-ester intermediate.

It belongs to the amidase family. GatA subfamily. In terms of assembly, heterotrimer of A, B and C subunits.

It catalyses the reaction L-glutamyl-tRNA(Gln) + L-glutamine + ATP + H2O = L-glutaminyl-tRNA(Gln) + L-glutamate + ADP + phosphate + H(+). Functionally, allows the formation of correctly charged Gln-tRNA(Gln) through the transamidation of misacylated Glu-tRNA(Gln) in organisms which lack glutaminyl-tRNA synthetase. The reaction takes place in the presence of glutamine and ATP through an activated gamma-phospho-Glu-tRNA(Gln). This chain is Glutamyl-tRNA(Gln) amidotransferase subunit A, found in Bacillus mycoides (strain KBAB4) (Bacillus weihenstephanensis).